Consider the following 23-residue polypeptide: NMITGAAQMXGAILVAYDSIXAA.

The protein belongs to the GTP-binding elongation factor family. EF-Tu/EF-1A subfamily. As to quaternary structure, monomer. Post-translationally, the N-terminus is blocked. The C-terminus may be subjected to proteolysis.

The protein resides in the cytoplasm. This protein promotes the GTP-dependent binding of aminoacyl-tRNA to the A-site of ribosomes during protein biosynthesis. This is Elongation factor Tu (tuf) from Delftia acidovorans (Pseudomonas acidovorans).